We begin with the raw amino-acid sequence, 620 residues long: Translation initiation factor IF-2 (620 aa).

In terms of domain architecture, tr-type G spans 119–288 (ERPPIVTIMG…IILISELENL (170 aa)). The segment at 128 to 135 (GHVDHGKT) is G1. Residue 128 to 135 (GHVDHGKT) participates in GTP binding. Residues 153–157 (GITQA) form a G2 region. Residues 175-178 (DTPG) are G3. Residues 175-179 (DTPGH) and 229-232 (NKID) each bind GTP. Residues 229–232 (NKID) are G4. Positions 265-267 (SAI) are G5.

Belongs to the TRAFAC class translation factor GTPase superfamily. Classic translation factor GTPase family. IF-2 subfamily.

The protein resides in the cytoplasm. Its function is as follows. One of the essential components for the initiation of protein synthesis. Protects formylmethionyl-tRNA from spontaneous hydrolysis and promotes its binding to the 30S ribosomal subunits. Also involved in the hydrolysis of GTP during the formation of the 70S ribosomal complex. The sequence is that of Translation initiation factor IF-2 from Mycoplasma capricolum subsp. capricolum (strain California kid / ATCC 27343 / NCTC 10154).